Here is a 961-residue protein sequence, read N- to C-terminus: Ubiquitin carboxyl-terminal hydrolase 4 (961 aa).

Residues proline 11–valine 122 form the DUSP domain. Positions threonine 27 to glutamate 216 are necessary for interaction with SART3. Residues valine 133–lysine 141 carry the Nuclear export signal motif. The Ubiquitin-like 1 domain maps to leucine 142–arginine 226. Residues asparagine 219 to alanine 257 form a disordered region. A compositionally biased stretch (polar residues) spans proline 225–threonine 243. The required for USP4 activation by providing conformational flexibility between the DUSP and catalytic domains stretch occupies residues leucine 229–proline 295. A compositionally biased stretch (low complexity) spans serine 244 to alanine 257. Residues cysteine 302–arginine 921 form the USP domain. The active site involves cysteine 311. Positions proline 384–phenylalanine 386 are regulates ubiquitin dissociation. Residues leucine 405–glutamate 407 form a necessary for interaction with RBL2 region. Serine 445 carries the phosphoserine modification. Residues leucine 459–glutamate 463 form a necessary for interaction with RB1 and RBL2 region. Zn(2+)-binding residues include cysteine 461 and cysteine 464. The 89-residue stretch at leucine 483 to proline 571 folds into the Ubiquitin-like 2 domain. The interval lysine 485–alanine 773 is interacts with DUSP and ubiquitin-like 1 domains and is required for USP4 activation. Positions serine 641–arginine 700 are disordered. 3 positions are modified to phosphoserine: serine 655, serine 674, and serine 679. A Nuclear localization signal motif is present at residues glutamine 765–lysine 770. Residues cysteine 797 and cysteine 800 each contribute to the Zn(2+) site. Histidine 879 is a catalytic residue. Residues glutamate 924–asparagine 961 are disordered. The span at leucine 950–asparagine 961 shows a compositional bias: acidic residues.

This sequence belongs to the peptidase C19 family. USP4 subfamily. As to quaternary structure, interacts with RB1 (both dephosphorylated and hypophosphorylated forms). Interacts with RBL1 and RBL2. Interacts with ADORA2A (via cytoplasmic C-terminus); the interaction is direct. Interacts with SART3; recruits USP4 to its substrate PRPF3. Post-translationally, phosphorylated at Ser-445 by PKB/AKT1 in response to EGF stimulus, promoting its ability deubiquitinate RHEB. Monoubiquitinated by TRIM21. Ubiquitination does not lead to its proteasomal degradation. Autodeubiquitinated. In terms of tissue distribution, expressed in hippocampus and striatum (at protein level).

Its subcellular location is the cytoplasm. It localises to the nucleus. The enzyme catalyses Thiol-dependent hydrolysis of ester, thioester, amide, peptide and isopeptide bonds formed by the C-terminal Gly of ubiquitin (a 76-residue protein attached to proteins as an intracellular targeting signal).. The completion of the deubiquitinase reaction is mediated by the DUSP and ubiquitin-like 1 domains which promotes the release of ubiquitin from the catalytic site enabling subsequent reactions to occur. Deubiquitinating enzyme that removes conjugated ubiquitin from target proteins. Deubiquitinates PDPK1. Deubiquitinates TRIM21. Deubiquitinates receptor ADORA2A which increases the amount of functional receptor at the cell surface. Deubiquitinates HAS2. Deubiquitinates RHEB in response to EGF signaling, promoting mTORC1 signaling. May regulate mRNA splicing through deubiquitination of the U4 spliceosomal protein PRPF3. This may prevent its recognition by the U5 component PRPF8 thereby destabilizing interactions within the U4/U6.U5 snRNP. May also play a role in the regulation of quality control in the ER. The chain is Ubiquitin carboxyl-terminal hydrolase 4 (Usp4) from Rattus norvegicus (Rat).